Here is a 205-residue protein sequence, read N- to C-terminus: Probable GTP-binding protein EngB (205 aa).

Residues Glu22 to Ile194 enclose the EngB-type G domain. GTP contacts are provided by residues Gly30–Ser37, Gly57–Leu61, Asp75–Gly78, Thr142–Asp145, and Phe173–Ala175. Mg(2+) is bound by residues Ser37 and Thr59.

This sequence belongs to the TRAFAC class TrmE-Era-EngA-EngB-Septin-like GTPase superfamily. EngB GTPase family. Mg(2+) is required as a cofactor.

Necessary for normal cell division and for the maintenance of normal septation. The sequence is that of Probable GTP-binding protein EngB from Desulfatibacillum aliphaticivorans.